A 107-amino-acid chain; its full sequence is Translation initiation factor IF-1, chloroplastic (107 aa).

Residues 8-83 (REKKNPREAK…SKGRIIYRLP (76 aa)) enclose the S1-like domain. Positions 81–107 (RLPHKDSKRTEDSKDTEDLKDTKDSKG) are disordered. The segment covering 83 to 107 (PHKDSKRTEDSKDTEDLKDTKDSKG) has biased composition (basic and acidic residues).

Belongs to the IF-1 family. In terms of assembly, component of the 30S ribosomal translation pre-initiation complex which assembles on the 30S ribosome in the order IF-2 and IF-3, IF-1 and N-formylmethionyl-tRNA(fMet); mRNA recruitment can occur at any time during PIC assembly.

The protein resides in the plastid. It localises to the chloroplast. Its function is as follows. One of the essential components for the initiation of protein synthesis. Stabilizes the binding of IF-2 and IF-3 on the 30S subunit to which N-formylmethionyl-tRNA(fMet) subsequently binds. Helps modulate mRNA selection, yielding the 30S pre-initiation complex (PIC). Upon addition of the 50S ribosomal subunit IF-1, IF-2 and IF-3 are released leaving the mature 70S translation initiation complex. This Oryza sativa subsp. indica (Rice) protein is Translation initiation factor IF-1, chloroplastic.